The sequence spans 356 residues: MTERRIIHIDMDYFFAQVEMRDNPKLKGKPVIVGGKASSRGVVSTASYEARKYGVHSAMPMSQAHKLCPNGYFVTSNFGAYRETSAQIMSIFRSYTDKVEPMSLDEAYLDITELVRPDLPASKIAQYIRKDILEQTHLTASAGVSYNKFLAKLASGMNKPDGLTVIDYQNVHDILMTLDIGDFPGVGKASKKVMHDNGIFNGRDLYEKTEFELIRLFGKRGRGLYNKARGIDHSEVKSSRVRKSVGTERTFATDVNDDEEILRKVWELSGKTAERLNKLQKSAKTVTVKIKTYQFETLSKQMSLRDSVSSEEDIYNIAYLLYNDLKDPDVPIRLIGVTVGNLEQSTYKNMTIYDFI.

The region spanning 6–187 is the UmuC domain; the sequence is IIHIDMDYFF…LDIGDFPGVG (182 aa). Residues aspartate 10 and aspartate 105 each contribute to the Mg(2+) site. Glutamate 106 is a catalytic residue.

Belongs to the DNA polymerase type-Y family. In terms of assembly, monomer. The cofactor is Mg(2+).

It localises to the cytoplasm. The catalysed reaction is DNA(n) + a 2'-deoxyribonucleoside 5'-triphosphate = DNA(n+1) + diphosphate. Its function is as follows. Poorly processive, error-prone DNA polymerase involved in untargeted mutagenesis. Copies undamaged DNA at stalled replication forks, which arise in vivo from mismatched or misaligned primer ends. These misaligned primers can be extended by PolIV. Exhibits no 3'-5' exonuclease (proofreading) activity. May be involved in translesional synthesis, in conjunction with the beta clamp from PolIII. The sequence is that of DNA polymerase IV from Staphylococcus aureus (strain Mu50 / ATCC 700699).